We begin with the raw amino-acid sequence, 210 residues long: Small ribosomal subunit protein uS4 (210 aa).

The interval 30 to 49 (EKSSLEKRKYPPGLPPKKKG) is disordered. The region spanning 99–162 (RRLDNVLYRM…QKSAFIEENI (64 aa)) is the S4 RNA-binding domain.

It belongs to the universal ribosomal protein uS4 family. As to quaternary structure, part of the 30S ribosomal subunit. Contacts protein S5. The interaction surface between S4 and S5 is involved in control of translational fidelity.

Functionally, one of the primary rRNA binding proteins, it binds directly to 16S rRNA where it nucleates assembly of the body of the 30S subunit. Its function is as follows. With S5 and S12 plays an important role in translational accuracy. This is Small ribosomal subunit protein uS4 from Leptospira biflexa serovar Patoc (strain Patoc 1 / Ames).